Reading from the N-terminus, the 293-residue chain is Cytochrome c biogenesis protein CcsA (293 aa).

The next 8 helical transmembrane spans lie at 12–32, 39–59, 78–98, 99–119, 142–162, 216–236, 250–267, and 273–293; these read INILAFLGALVSSLFYWAKLT, VFSLPKFCLIFSNCIIAGMLL, LFLSWVLNIITIIFVDKLSII, GAIGSSAVTLIIGYANYILPP, VMIFSYGLLIMGAFLSLIYVI, FISLGFISLTLGIISGSVWAN, TWALITWLVFATYLHIRI, and KIYASLVASLGLIVICFVTWE.

It belongs to the CcmF/CycK/Ccl1/NrfE/CcsA family. May interact with Ccs1.

The protein resides in the plastid. It is found in the chloroplast thylakoid membrane. In terms of biological role, required during biogenesis of c-type cytochromes (cytochrome c6 and cytochrome f) at the step of heme attachment. This Cyanidium caldarium (Red alga) protein is Cytochrome c biogenesis protein CcsA.